The chain runs to 306 residues: Pantothenate kinase (306 aa).

Residue 91–98 (GSVAVGKS) participates in ATP binding.

Belongs to the prokaryotic pantothenate kinase family.

It is found in the cytoplasm. It carries out the reaction (R)-pantothenate + ATP = (R)-4'-phosphopantothenate + ADP + H(+). The protein operates within cofactor biosynthesis; coenzyme A biosynthesis; CoA from (R)-pantothenate: step 1/5. This Streptococcus pyogenes serotype M12 (strain MGAS2096) protein is Pantothenate kinase.